Reading from the N-terminus, the 523-residue chain is Pentatricopeptide repeat-containing protein At3g21470 (523 aa).

PPR repeat units follow at residues 10-43, 44-79, 80-114, 115-141, 143-173, 176-210, 211-237, 238-272, 273-307, 308-338, 339-373, 374-408, and 409-439; these read GEFHVSNLIKNHISRGSPIQALVLYGGIRRRGVY, FPGWVPLILRACACVVPRVVLGKLLHSESIKFGVCS, DVMVGSSLISMYGKCGCVVSARKVFDEMPERNVAT, WNAMIGGYMSNGDAVLASGLFEEISVC, NTVTWIEMIKGYGKRIEIEKARELFERMPFE, NVKAWSVMLGVYVNNRKMEDARKFFEDIPEKNAFV, WSLMMSGYFRIGDVHEARAIFYRVFAR, DLVIWNTLIAGYAQNGYSDDAIDAFFNMQGEGYEP, DAVTVSSILSACAQSGRLDVGREVHSLINHRGIEL, NQFVSNALIDMYAKCGDLENATSVFESISVR, SVACCNSMISCLAIHGKGKEALEMFSTMESLDLKP, DEITFIAVLTACVHGGFLMEGLKIFSEMKTQDVKP, and NVKHFGCLIHLLGRSGKLKEAYRLVKEMHVK. Residues 444 to 523 are type E motif; the sequence is VLGALLGACK…SPGLSSLVLT (80 aa).

Belongs to the PPR family. PCMP-E subfamily.

This chain is Pentatricopeptide repeat-containing protein At3g21470 (PCMP-E29), found in Arabidopsis thaliana (Mouse-ear cress).